The chain runs to 202 residues: uncharacterized protein (202 aa).

This is an uncharacterized protein from Escherichia coli (Bacteriophage T4).